A 605-amino-acid chain; its full sequence is YTH domain-containing protein ECT4 (605 aa).

2 disordered regions span residues 249–274 (GVASSYSKANNNVPATRNQNSSSNSH) and 357–384 (ELNRGPRAKGTKATEEVSSEEVKKQTFD). Polar residues predominate over residues 256–274 (KANNNVPATRNQNSSSNSH). Residues 368 to 383 (KATEEVSSEEVKKQTF) show a composition bias toward basic and acidic residues. The region spanning 414–551 (AKFFIIKSYS…EQGLKVVKIF (138 aa)) is the YTH domain. Residues 420–422 (KSY), Asp426, 436–437 (WA), Asn469, Trp493, Trp498, and Trp506 contribute to the RNA site. The segment at 580–605 (KQQQSQKQVWEGKTNDEKPGTVDSTM) is disordered.

Expressed in the shoot apex, at the sites of leaf formation, and in emerging leaves.

The protein localises to the cytoplasm. Its function is as follows. Specifically recognizes and binds N6-methyladenosine (m6A)-containing RNAs, and regulates mRNA stability. M6A is a modification present at internal sites of mRNAs and some non-coding RNAs and plays a role in mRNA stability and processing. Required for the correct timing of leaf formation and normal leaf morphology. The sequence is that of YTH domain-containing protein ECT4 from Arabidopsis thaliana (Mouse-ear cress).